A 413-amino-acid polypeptide reads, in one-letter code: Unsaturated 3S-rhamnoglycuronyl hydrolase (413 aa).

Residues 1-21 (MNHTKLKLSAVALTLALGLSA) form the signal peptide. Cys-22 carries the N-palmitoyl cysteine lipid modification. Residue Cys-22 is the site of S-diacylglycerol cysteine attachment. Catalysis depends on Asp-203, which acts as the Proton donor.

This sequence belongs to the glycosyl hydrolase 105 family.

It is found in the cell membrane. Its function is as follows. Glucuronyl hydrolase involved in ulvan degradation. Ulvan is the main polysaccharide component of the Ulvales (green seaweed) cell wall. It is composed of disaccharide building blocks comprising 3-sulfated rhamnose (Rha3S) linked to D-glucuronic acid (GlcA), L-iduronic acid (IduA), or D-xylose (Xyl). Unsaturated 3S-rhamnoglycuronyl hydrolase works together with ulvan lyases to fully degrade the ulvan polymer, catalyzing specifically the cleavage of the unsaturated 4-deoxy-L-threo-hex-4-enopyranosiduronic acid (deltaUA) of the deltaUA-oligosaccharides deltaUA-Rha3S, deltaUA-Rha3S-IduA-Rha3S and deltaUA-Rha3S-Xyl-Rha3S, the end products of the ulvan lyase reaction. In Alteromonas sp. (strain LOR), this protein is Unsaturated 3S-rhamnoglycuronyl hydrolase.